A 278-amino-acid polypeptide reads, in one-letter code: Sulfur carrier protein FdhD (278 aa).

The Cysteine persulfide intermediate role is filled by C121. Residue 260–265 (FCKPGR) participates in Mo-bis(molybdopterin guanine dinucleotide) binding.

It belongs to the FdhD family.

Its subcellular location is the cytoplasm. In terms of biological role, required for formate dehydrogenase (FDH) activity. Acts as a sulfur carrier protein that transfers sulfur from IscS to the molybdenum cofactor prior to its insertion into FDH. The polypeptide is Sulfur carrier protein FdhD (Escherichia coli O127:H6 (strain E2348/69 / EPEC)).